The sequence spans 285 residues: Shikimate dehydrogenase (NADP(+)) (285 aa).

Shikimate-binding positions include 19-21 (SLS) and Thr66. Lys70 (proton acceptor) is an active-site residue. Asn91 and Asp107 together coordinate shikimate. NADP(+)-binding positions include 129–133 (GSGGA) and Leu228. Residue Tyr230 participates in shikimate binding. Gly251 is an NADP(+) binding site.

Belongs to the shikimate dehydrogenase family. As to quaternary structure, homodimer.

The catalysed reaction is shikimate + NADP(+) = 3-dehydroshikimate + NADPH + H(+). It participates in metabolic intermediate biosynthesis; chorismate biosynthesis; chorismate from D-erythrose 4-phosphate and phosphoenolpyruvate: step 4/7. Functionally, involved in the biosynthesis of the chorismate, which leads to the biosynthesis of aromatic amino acids. Catalyzes the reversible NADPH linked reduction of 3-dehydroshikimate (DHSA) to yield shikimate (SA). This is Shikimate dehydrogenase (NADP(+)) from Prochlorococcus marinus (strain MIT 9515).